The chain runs to 325 residues: Palmitoyltransferase PFA3 (325 aa).

The Cytoplasmic segment spans residues 1–8 (MHICSLIP). Residues 9–29 (ILFPKLLTCGLALYSAVVLWL) form a helical membrane-spanning segment. Residue K30 is a topological domain, lumenal. A helical transmembrane segment spans residues 31–51 (VSVIGSFIQGTVLLTLVPLIL). Residues 52-147 (YAYFSTIAVG…PGCIGYNNHK (96 aa)) are Cytoplasmic-facing. Positions 104-154 (RYCVKCKVWKPDRCHHCSACDKCYLRRDHHCVWFPGCIGYNNHKFFLHFLL) constitute a DHHC domain. A helical membrane pass occupies residues 148–168 (FFLHFLLYASVYAFWICIITT). Residues 169 to 188 (WDLVVWFRAHSYERELLNVH) are Lumenal-facing. Residues 189-209 (LVCLWALSAAATVALTAFCAF) form a helical membrane-spanning segment. Topologically, residues 210 to 325 (NIYLVCKNET…TRFNSKRAVQ (116 aa)) are cytoplasmic.

The protein belongs to the DHHC palmitoyltransferase family. PFA3 subfamily. In terms of processing, autopalmitoylated.

It is found in the vacuole membrane. The catalysed reaction is L-cysteinyl-[protein] + hexadecanoyl-CoA = S-hexadecanoyl-L-cysteinyl-[protein] + CoA. Its function is as follows. Palmitoyltransferase specific for VAC8. Palmitoylates VAC8 at one or more of its N-terminal cysteine residues, which is required for its proper membrane localization. The polypeptide is Palmitoyltransferase PFA3 (PFA3) (Eremothecium gossypii (strain ATCC 10895 / CBS 109.51 / FGSC 9923 / NRRL Y-1056) (Yeast)).